We begin with the raw amino-acid sequence, 993 residues long: Desmoglein-3 (993 aa).

An N-terminal signal peptide occupies residues 1 to 23 (MTWLLFRTSGALAILMVLILVHG). A propeptide spanning residues 24 to 48 (ELRIETKGQHGEDETAIQGRRRYKR) is cleaved from the precursor. Cadherin domains lie at 48-156 (REWV…APVF), 157-266 (SQSI…FPMF), 267-386 (KESQ…HPAS), and 383-494 (HPAS…CPTV). The Extracellular portion of the chain corresponds to 49–617 (EWVKFAKPCR…GKRPSGRLGS (569 aa)). Residues Asn-109 and Asn-179 are each glycosylated (N-linked (GlcNAc...) asparagine). N-linked (GlcNAc...) asparagine glycans are attached at residues Asn-458 and Asn-544. Residues 618–638 (AAIGLLLLGLLLLLLAPLLLL) form a helical membrane-spanning segment. Over 639-993 (TCDYGVGPIG…CTEDPCSRLI (355 aa)) the chain is Cytoplasmic. Residues 641–713 (DYGVGPIGGV…NTYAGGTVVE (73 aa)) are required for interaction with CTNND1 and localization at cell-cell junctions. Desmoglein repeat repeat units lie at residues 903–929 (LSAS…MVTE) and 930–960 (TYSA…ERVI).

As to quaternary structure, homodimer. Part of a complex that contains DSG3, PKP1, YAP1 and YWHAG; the complex is required for localization of DSG3 and YAP1 to the cell membrane in keratinocytes. Interacts with PKP2. Interacts with CTNND1; the interaction facilitates DSG3 localization and retention at cell-cell junctions. Interacts with CDH1; the interaction is required for CDH1 localization to developing adherens junctions. Interacts with RAC1; the interaction is required for DSG3 translocation to cell-cell junctions, organization of cortical F-actin bundles and actin anchoring at cell-cell junctions. Interacts with DSC3; the interaction may limit the interaction of DSC3 with p38MAPK family members and therefore repress p38MAPK signaling activation.

Its subcellular location is the cell membrane. It is found in the cell junction. The protein resides in the desmosome. The protein localises to the cytoplasm. It localises to the tight junction. Functionally, a component of desmosome cell-cell junctions which are required for positive regulation of cellular adhesion. Required for adherens and desmosome junction assembly in response to mechanical force in keratinocytes. Required for desmosome-mediated cell-cell adhesion of cells surrounding the telogen hair club and the basal layer of the outer root sheath epithelium, consequently is essential for the anchoring of telogen hairs in the hair follicle. Required for the maintenance of the epithelial barrier via promoting desmosome-mediated intercellular attachment of suprabasal epithelium to basal cells. May play a role in the protein stability of the desmosome plaque components DSP, JUP, PKP1, PKP2 and PKP3. Required for YAP1 localization at the plasma membrane in keratinocytes in response to mechanical strain, via the formation of an interaction complex composed of DSG3, PKP1 and YWHAG. May also be involved in the positive regulation of YAP1 target gene transcription and as a result cell proliferation. Positively regulates cellular contractility and cell junction formation via organization of cortical F-actin bundles and anchoring of actin to tight junctions, in conjunction with RAC1. The cytoplasmic pool of DSG3 is required for the localization of CDH1 and CTNNB1 at developing adherens junctions, potentially via modulation of SRC activity. Inhibits keratinocyte migration via suppression of p38MAPK signaling, may therefore play a role in moderating wound healing. The chain is Desmoglein-3 (DSG3) from Canis lupus familiaris (Dog).